Consider the following 111-residue polypeptide: WAP four-disulfide core domain protein 12 (111 aa).

The N-terminal stretch at 1-23 (MGSSSFLVLMVSLALVTLVVVEG) is a signal peptide. One can recognise a WAP domain in the interval 27–74 (GIEKAGVCPADNVRCFKSNPPQCHTDQDCLGERKCCYLHCGFKCVIPV). 4 cysteine pairs are disulfide-bonded: Cys34/Cys62, Cys41/Cys66, Cys49/Cys61, and Cys55/Cys70. Residues 80–111 (GGNKDEDVSGPHPEPGWEAKSPGSSSTGCPQI) are disordered. Polar residues predominate over residues 101-111 (PGSSSTGCPQI).

The protein resides in the secreted. In terms of biological role, antibacterial protein. Putative acid-stable proteinase inhibitor. The polypeptide is WAP four-disulfide core domain protein 12 (WFDC12) (Colobus guereza (Mantled guereza)).